Here is a 322-residue protein sequence, read N- to C-terminus: MLFATLEHILTHISFSTISIVITIHLRALLVRELGGLRDSSEKGMIATFFSITGFLVSRWLSSGHFPLSNLYESLIFLSWALYILHTIPKVQNSKNDLSTITTPSTILTQGFATSGLLTEMHQSTILVPALQSQWLMMHVSMMLLSYATLLCGSLLSAAILIIRFRNNFNFFSKKNKNVLKKTFLFSKMEYFYAKRSYFKSASVPSFPNYYKYQLTERLDSWSYRVISLGFTLLTIGILCGAVWANEAWGSYWNWDPKETWAFITWTIFAIYLHSRTNQNWKGTNSALVASIGFLIIWICYFGINLLGIGLHSYGSFTLTPN.

The next 7 membrane-spanning stretches (helical) occupy residues 2–22 (LFATLEHILTHISFSTISIVI), 44–64 (GMIATFFSITGFLVSRWLSSG), 68–88 (LSNLYESLIFLSWALYILHTI), 143–163 (MLLSYATLLCGSLLSAAILII), 226–246 (VISLGFTLLTIGILCGAVWAN), 260–274 (TWAFITWTIFAIYLH), and 289–309 (VASIGFLIIWICYFGINLLGI).

Belongs to the CcmF/CycK/Ccl1/NrfE/CcsA family. In terms of assembly, may interact with Ccs1.

It localises to the plastid. The protein resides in the chloroplast thylakoid membrane. In terms of biological role, required during biogenesis of c-type cytochromes (cytochrome c6 and cytochrome f) at the step of heme attachment. This chain is Cytochrome c biogenesis protein CcsA, found in Brachypodium distachyon (Purple false brome).